We begin with the raw amino-acid sequence, 491 residues long: Glutathione synthetase GSH2 (491 aa).

R128 provides a ligand contact to substrate. Residue E146 participates in ATP binding. E146 and N148 together coordinate Mg(2+). Residues 150–153 (VSVS), 228–230 (ERN), Q234, and 285–288 (RTGY) contribute to the substrate site. ATP contacts are provided by residues K324, 382-391 (KPQREGGGNN), Y393, 415-418 (MELI), and E442. Mg(2+) is bound at residue E386. R467 is a substrate binding site. 2 residues coordinate ATP: K469 and E475. 478-479 (VA) is a binding site for substrate.

This sequence belongs to the eukaryotic GSH synthase family. In terms of assembly, homodimer. It depends on Mg(2+) as a cofactor.

It carries out the reaction gamma-L-glutamyl-L-cysteine + glycine + ATP = glutathione + ADP + phosphate + H(+). Its pathway is sulfur metabolism; glutathione biosynthesis; glutathione from L-cysteine and L-glutamate: step 2/2. In Saccharomyces cerevisiae (strain ATCC 204508 / S288c) (Baker's yeast), this protein is Glutathione synthetase GSH2 (GSH2).